The sequence spans 914 residues: Protein translocase subunit SecA (914 aa).

Residues glutamine 87, 105–109, and aspartate 508 each bind ATP; that span reads GEGKT. Zn(2+) contacts are provided by cysteine 898, cysteine 900, cysteine 909, and histidine 910.

It belongs to the SecA family. Monomer and homodimer. Part of the essential Sec protein translocation apparatus which comprises SecA, SecYEG and auxiliary proteins SecDF-YajC and YidC. It depends on Zn(2+) as a cofactor.

It localises to the cell inner membrane. Its subcellular location is the cytoplasm. The catalysed reaction is ATP + H2O + cellular proteinSide 1 = ADP + phosphate + cellular proteinSide 2.. Functionally, part of the Sec protein translocase complex. Interacts with the SecYEG preprotein conducting channel. Has a central role in coupling the hydrolysis of ATP to the transfer of proteins into and across the cell membrane, serving both as a receptor for the preprotein-SecB complex and as an ATP-driven molecular motor driving the stepwise translocation of polypeptide chains across the membrane. In Xylella fastidiosa (strain M12), this protein is Protein translocase subunit SecA.